We begin with the raw amino-acid sequence, 474 residues long: Alginate biosynthesis protein AlgX (474 aa).

The first 26 residues, 1 to 26 (MKTRTSRLFRLSALAAGLCLAQAALA), serve as a signal peptide directing secretion. Residues 27-347 (ADPGAAPSYQ…QAMPLVDNGC (321 aa)) form an SGNH hydrolase-like domain region. Cysteine 44 and cysteine 229 are joined by a disulfide. The active site involves aspartate 174. Histidine 176 (proton acceptor) is an active-site residue. Catalysis depends on serine 269, which acts as the Nucleophile. An intrachain disulfide couples cysteine 347 to cysteine 460. Residues 348 to 474 (SGRKTVLSRK…AKASQSVAGR (127 aa)) are CBM domain.

This sequence belongs to the AlgX family. Monomer. Interacts with AlgK and MucD.

The protein resides in the periplasm. It functions in the pathway glycan biosynthesis; alginate biosynthesis. Its function is as follows. Plays two roles in the biosynthesis of the exopolysaccharide alginate: protects alginate from degradation as the polymer traverses the periplasm, and also plays a role in its O-acetylation. Acetylation of alginate causes the cells in the biofilm to adhere better to lung epithelium, form microcolonies, and resist the effects of the host immune system and/or antibiotics. Displays a low acetylesterase activity in vitro using a pseudosubstrate, 3-carboxyumbelliferyl acetate. Probably has acetyltransferase activity in vivo. This chain is Alginate biosynthesis protein AlgX (algX), found in Pseudomonas aeruginosa (strain ATCC 15692 / DSM 22644 / CIP 104116 / JCM 14847 / LMG 12228 / 1C / PRS 101 / PAO1).